The sequence spans 197 residues: Probable GTP-binding protein EngB (197 aa).

Positions 22–197 (TGVEVAFAGR…LKEKLDIWYQ (176 aa)) constitute an EngB-type G domain. Residues 30–37 (GRSNAGKS), 57–61 (GRTQL), 75–78 (DLPG), 142–145 (TKAD), and 177–179 (FSS) each bind GTP. S37 and T59 together coordinate Mg(2+).

Belongs to the TRAFAC class TrmE-Era-EngA-EngB-Septin-like GTPase superfamily. EngB GTPase family. Requires Mg(2+) as cofactor.

Its function is as follows. Necessary for normal cell division and for the maintenance of normal septation. This Francisella philomiragia subsp. philomiragia (strain ATCC 25017 / CCUG 19701 / FSC 153 / O#319-036) protein is Probable GTP-binding protein EngB.